The following is a 163-amino-acid chain: MTHWITLLAVEKVAKEGGLFDLDATLPLMAIQFLLLALILNATLYKPLGKAIDGRNEYVRNNQLEAQERLSKAEKLAEAYEQELAGARRQAQTIIADAQAEAQKIAAEKVAAAQKEAQAQREQAAGEIEQQKQQALASLEQQVDALSRQILEKLLGADLVKQR.

A helical membrane pass occupies residues 28–45 (LMAIQFLLLALILNATLY).

The protein belongs to the ATPase B chain family. F-type ATPases have 2 components, F(1) - the catalytic core - and F(0) - the membrane proton channel. F(1) has five subunits: alpha(3), beta(3), gamma(1), delta(1), epsilon(1). F(0) has four main subunits: a(1), b(1), b'(1) and c(10-14). The alpha and beta chains form an alternating ring which encloses part of the gamma chain. F(1) is attached to F(0) by a central stalk formed by the gamma and epsilon chains, while a peripheral stalk is formed by the delta, b and b' chains.

Its subcellular location is the cellular thylakoid membrane. Functionally, f(1)F(0) ATP synthase produces ATP from ADP in the presence of a proton or sodium gradient. F-type ATPases consist of two structural domains, F(1) containing the extramembraneous catalytic core and F(0) containing the membrane proton channel, linked together by a central stalk and a peripheral stalk. During catalysis, ATP synthesis in the catalytic domain of F(1) is coupled via a rotary mechanism of the central stalk subunits to proton translocation. In terms of biological role, component of the F(0) channel, it forms part of the peripheral stalk, linking F(1) to F(0). The b'-subunit is a diverged and duplicated form of b found in plants and photosynthetic bacteria. The protein is ATP synthase subunit b' of Nostoc sp. (strain PCC 7120 / SAG 25.82 / UTEX 2576).